Reading from the N-terminus, the 640-residue chain is 5-aminolevulinate synthase, non-specific, mitochondrial (640 aa).

The N-terminal 56 residues, 1–56 (METVVRSCPFLSRVPQAFLQKAGKSLLFYAQNCPKMMEVGAKPAPRALSTAAVHYQ), are a transit peptide targeting the mitochondrion. Disordered regions lie at residues 60-103 (ETPP…TSQG) and 143-163 (EVAETSGGPSVVSVKTDGGDP). Polar residues predominate over residues 75–92 (VQQTPDGSQQSPDGTQLP). Residues arginine 217, serine 334, and lysine 353 each coordinate substrate. Pyridoxal 5'-phosphate contacts are provided by serine 386, histidine 414, and threonine 442. Lysine 445 is a catalytic residue. Residue lysine 445 is modified to N6-(pyridoxal phosphate)lysine. Threonine 474 and threonine 475 together coordinate pyridoxal 5'-phosphate. A substrate-binding site is contributed by threonine 562. Residue proline 576 is modified to Hydroxyproline.

Belongs to the class-II pyridoxal-phosphate-dependent aminotransferase family. As to quaternary structure, homodimer. Interacts (hydroxylated form) with VHL. It depends on pyridoxal 5'-phosphate as a cofactor. In terms of processing, in normoxia, is hydroxylated at Pro-576, promoting interaction with VHL, initiating ubiquitination and subsequent degradation via the proteasome. Post-translationally, ubiquitinated; in normoxia following hydroxylation and interaction with VHL, leading to its subsequent degradation via the proteasome.

The protein localises to the mitochondrion inner membrane. The catalysed reaction is succinyl-CoA + glycine + H(+) = 5-aminolevulinate + CO2 + CoA. Its pathway is porphyrin-containing compound metabolism; protoporphyrin-IX biosynthesis; 5-aminolevulinate from glycine: step 1/1. In terms of biological role, catalyzes the pyridoxal 5'-phosphate (PLP)-dependent condensation of succinyl-CoA and glycine to form aminolevulinic acid (ALA), with CoA and CO2 as by-products. The protein is 5-aminolevulinate synthase, non-specific, mitochondrial (ALAS1) of Pongo abelii (Sumatran orangutan).